We begin with the raw amino-acid sequence, 109 residues long: T cell receptor alpha variable 27 (109 aa).

The first 19 residues, 1 to 19, serve as a signal peptide directing secretion; sequence MVLKFSVSILWIQLAWVST. The Ig-like domain maps to 20–109; sequence QLLEQSPQFL…GDTGLYLCAG (90 aa). Asn-36 and Asn-42 each carry an N-linked (GlcNAc...) asparagine glycan. Cysteines 41 and 107 form a disulfide.

As to quaternary structure, alpha-beta TR is a heterodimer composed of an alpha and beta chain; disulfide-linked. The alpha-beta TR is associated with the transmembrane signaling CD3 coreceptor proteins to form the TR-CD3 (TcR or TCR). The assembly of alpha-beta TR heterodimers with CD3 occurs in the endoplasmic reticulum where a single alpha-beta TR heterodimer associates with one CD3D-CD3E heterodimer, one CD3G-CD3E heterodimer and one CD247 homodimer forming a stable octameric structure. CD3D-CD3E and CD3G-CD3E heterodimers preferentially associate with TR alpha and TR beta chains, respectively. The association of the CD247 homodimer is the last step of TcR assembly in the endoplasmic reticulum and is required for transport to the cell surface. In terms of assembly, (Microbial infection) Interacts with Staphylococcus aureus enterotoxin H/entH.

Its subcellular location is the cell membrane. Functionally, v region of the variable domain of T cell receptor (TR) alpha chain that participates in the antigen recognition. Alpha-beta T cell receptors are antigen specific receptors which are essential to the immune response and are present on the cell surface of T lymphocytes. Recognize peptide-major histocompatibility (MH) (pMH) complexes that are displayed by antigen presenting cells (APC), a prerequisite for efficient T cell adaptive immunity against pathogens. Binding of alpha-beta TR to pMH complex initiates TR-CD3 clustering on the cell surface and intracellular activation of LCK that phosphorylates the ITAM motifs of CD3G, CD3D, CD3E and CD247 enabling the recruitment of ZAP70. In turn, ZAP70 phosphorylates LAT, which recruits numerous signaling molecules to form the LAT signalosome. The LAT signalosome propagates signal branching to three major signaling pathways, the calcium, the mitogen-activated protein kinase (MAPK) kinase and the nuclear factor NF-kappa-B (NF-kB) pathways, leading to the mobilization of transcription factors that are critical for gene expression and essential for T cell growth and differentiation. The T cell repertoire is generated in the thymus, by V-(D)-J rearrangement. This repertoire is then shaped by intrathymic selection events to generate a peripheral T cell pool of self-MH restricted, non-autoaggressive T cells. Post-thymic interaction of alpha-beta TR with the pMH complexes shapes TR structural and functional avidity. The polypeptide is T cell receptor alpha variable 27 (Homo sapiens (Human)).